A 106-amino-acid polypeptide reads, in one-letter code: UPF0145 protein PputW619_2377 (106 aa).

This sequence belongs to the UPF0145 family.

This Pseudomonas putida (strain W619) protein is UPF0145 protein PputW619_2377.